The primary structure comprises 283 residues: Small ribosomal subunit protein uS3 (283 aa).

The 69-residue stretch at 39 to 107 (VRAYLKTKLK…PVHVNIEEIR (69 aa)) folds into the KH type-2 domain. The segment at 209–283 (PSGEPPVDLT…GAVPAEKAGE (75 aa)) is disordered. The segment covering 217 to 235 (LTKEDDTKRRGPRRDDGKP) has biased composition (basic and acidic residues). A compositionally biased stretch (low complexity) spans 244 to 260 (PEGQPGAAAAPGAAPAA).

This sequence belongs to the universal ribosomal protein uS3 family. As to quaternary structure, part of the 30S ribosomal subunit. Forms a tight complex with proteins S10 and S14.

Binds the lower part of the 30S subunit head. Binds mRNA in the 70S ribosome, positioning it for translation. This is Small ribosomal subunit protein uS3 from Herminiimonas arsenicoxydans.